Here is a 296-residue protein sequence, read N- to C-terminus: Protein csh3 (296 aa).

The tract at residues 46–138 is disordered; that stretch reads ASPVTAPAAQ…PPSYPGPNTA (93 aa). Basic and acidic residues predominate over residues 93–103; that stretch reads GEKRTPEEPRK. Residues 111-124 are compositionally biased toward polar residues; sequence QKQSEASSVNSSTE. Residues 140–199 form the SH3 domain; that stretch reads KNVERVLAMYDFPGPDAGDLGFHAGEVIIVLEHVNNDWWRGELNGKEGIFPSNYVRLLED. Residues 202-246 are disordered; that stretch reads VKAQPPPPPPQQNYPPAASSSAPPMQYQQTAYPPQQAPYPPVQAY. A compositionally biased stretch (pro residues) spans 205 to 214; it reads QPPPPPPQQN. Positions 215–235 are enriched in low complexity; sequence YPPAASSSAPPMQYQQTAYPP.

In Schizosaccharomyces pombe (strain 972 / ATCC 24843) (Fission yeast), this protein is Protein csh3 (csh3).